The chain runs to 194 residues: Small ribosomal subunit protein uS7 (194 aa).

It belongs to the universal ribosomal protein uS7 family. Part of the 30S ribosomal subunit.

In terms of biological role, one of the primary rRNA binding proteins, it binds directly to 16S rRNA where it nucleates assembly of the head domain of the 30S subunit. Is located at the subunit interface close to the decoding center. The protein is Small ribosomal subunit protein uS7 of Methanocorpusculum labreanum (strain ATCC 43576 / DSM 4855 / Z).